The primary structure comprises 964 residues: E3 ubiquitin-protein ligase TRIM37 (964 aa).

An N-acetylmethionine modification is found at methionine 1. Residues 15–55 form an RING-type; degenerate zinc finger; sequence CFICMEKLRDARLCPHCSKLCCFSCIRRWLTEQRAQCPHCR. The B box-type zinc finger occupies 90–132; sequence NEKDKCENHHEKLSVFCWTCKKCICHQCALWGGMHGGHTFKPL. Positions 95, 98, 117, and 124 each coordinate Zn(2+). The stretch at 132–234 forms a coiled coil; sequence LAEIYEQHVT…VEHQLRSCSK (103 aa). The MATH domain occupies 276–403; that stretch reads YDSATFVLEN…NDTVILRFQV (128 aa). The stretch at 419–450 forms a coiled coil; that stretch reads ITQLEAAQTSYIQQINNLKERLTIELSRTQKS. The residue at position 454 (serine 454) is a Phosphoserine. Disordered regions lie at residues 477 to 513, 530 to 554, and 640 to 663; these read CSDM…HHEL, QLDG…IDEE, and RPPA…RKQQ. Residues 503–513 are compositionally biased toward basic and acidic residues; the sequence is KIQNEDYHHEL. Over residues 534–544 the composition is skewed to low complexity; sequence SSSSASSTATS. Residues 673–700 are a coiled coil; the sequence is KMLKRLKTQMAEVRCMKTDVKNTLSEIK. Residues 752-761 are compositionally biased toward polar residues; sequence NSTNKKSNSP. Disordered stretches follow at residues 752-812 and 891-964; these read NSTN…SPRA and GASA…NSGR. Basic and acidic residues predominate over residues 776 to 788; it reads RAVDPGENSRSKG. The segment covering 794–807 has biased composition (low complexity); sequence SEGSPGSSQSGSRH. The span at 904-916 shows a compositional bias: acidic residues; the sequence is SDIECDTENEEQE. The segment covering 955-964 has biased composition (polar residues); it reads SFNTDENSGR.

The protein belongs to the TRIM/RBCC family. Associates with the PRC2/EED-EZH2 complex. Auto-ubiquitinated. As to expression, ubiquitous. Highly expressed in testis, while it is weakly expressed in other tissues.

The protein resides in the chromosome. The protein localises to the cytoplasm. It localises to the perinuclear region. Its subcellular location is the peroxisome membrane. It catalyses the reaction S-ubiquitinyl-[E2 ubiquitin-conjugating enzyme]-L-cysteine + [acceptor protein]-L-lysine = [E2 ubiquitin-conjugating enzyme]-L-cysteine + N(6)-ubiquitinyl-[acceptor protein]-L-lysine.. The protein operates within protein modification; protein ubiquitination. E3 ubiquitin-protein ligase required to prevent centriole reduplication. Probably acts by ubiquitinating positive regulators of centriole reduplication. Mediates monoubiquitination of 'Lys-119' of histone H2A (H2AK119Ub), a specific tag for epigenetic transcriptional repression: associates with some Polycomb group (PcG) multiprotein PRC2-like complex and mediates repression of target genes. Also acts as a positive regulator of peroxisome import by mediating monoubiquitination of PEX5 at 'Lys-472': monoubiquitination promotes PEX5 stabilitation by preventing its polyubiquitination and degradation by the proteasome. Has anti-HIV activity. The protein is E3 ubiquitin-protein ligase TRIM37 of Homo sapiens (Human).